The primary structure comprises 1229 residues: Membrane-anchored lipid-binding protein SIP3 (1229 aa).

Residues 1–1066 (MSVHGRDPKK…AEKFSRINRM (1066 aa)) lie on the Cytoplasmic side of the membrane. A PH domain is found at 309–423 (SPEKSGWLYM…WLIAFEATKK (115 aa)). The 206-residue stretch at 771–976 (EYSITYNHEY…VLRYYLEKIG (206 aa)) folds into the VASt domain. Residues 1067–1087 (MVVGLLASIMINILLSEKASV) form a helical membrane-spanning segment. At 1088 to 1229 (PYWSIKRAEK…ELEKLRPPIT (142 aa)) the chain is on the lumenal side. An N-linked (GlcNAc...) asparagine glycan is attached at Asn1206.

It belongs to the SIP3 family. As to quaternary structure, interacts with SNF1.

It localises to the endoplasmic reticulum membrane. In terms of biological role, may be involved in sterol transfer between intracellular membranes. This chain is Membrane-anchored lipid-binding protein SIP3, found in Saccharomyces cerevisiae (strain ATCC 204508 / S288c) (Baker's yeast).